A 281-amino-acid chain; its full sequence is Stomatin-4 (281 aa).

The chain crosses the membrane as a helical span at residues Trp28 to Phe48.

It belongs to the band 7/mec-2 family.

Its subcellular location is the membrane. In Caenorhabditis elegans, this protein is Stomatin-4 (sto-4).